A 906-amino-acid chain; its full sequence is Ectonucleotide pyrophosphatase/phosphodiesterase family member 1 (906 aa).

The disordered stretch occupies residues 1–22; sequence MERDGDQAGHGPRHGSAGNGRE. Residues 1–58 lie on the Cytoplasmic side of the membrane; the sequence is MERDGDQAGHGPRHGSAGNGRELESPAAASLLAPMDLGEEPLEKAERARPAKDPNTYK. Ser-25 is subject to Phosphoserine. Residues 27 to 34 carry the Di-leucine motif motif; the sequence is AAASLLAP. Residues 59-79 form a helical; Signal-anchor for type II membrane protein membrane-spanning segment; the sequence is VLSLVLSVCVLTTILGCIFGL. The Extracellular portion of the chain corresponds to 80–906; the sequence is KPSCAKEVKS…THLPIFSQED (827 aa). SMB domains follow at residues 86 to 126 and 127 to 171; these read EVKS…VEPT and HIWT…DKKS. 10 disulfides stabilise this stretch: Cys-90–Cys-104, Cys-94–Cys-122, Cys-102–Cys-115, Cys-108–Cys-114, Cys-131–Cys-148, Cys-136–Cys-166, Cys-146–Cys-159, Cys-152–Cys-158, Cys-177–Cys-223, and Cys-185–Cys-397. A glycan (N-linked (GlcNAc...) asparagine) is linked at Asn-161. The tract at residues 173-573 is phosphodiesterase; the sequence is VEETCESIDT…APNNGSHGSL (401 aa). Residues Asp-200, Thr-238, and Asn-259 each contribute to the AMP site. Residues Asp-200 and Thr-238 each contribute to the Zn(2+) site. Residue Thr-238 is the AMP-threonine intermediate of the active site. Thr-238 and Asn-259 together coordinate CMP. Positions 238 and 259 each coordinate dTMP. GMP-binding residues include Thr-238 and Asn-259. Thr-238 is subject to Phosphothreonine. Asn-267 carries an N-linked (GlcNAc...) asparagine glycan. GMP-binding residues include Leu-272, Lys-277, and Tyr-322. Positions 277 and 322 each coordinate AMP. Positions 277 and 322 each coordinate CMP. Tyr-322 lines the dTMP pocket. An N-linked (GlcNAc...) asparagine glycan is attached at Asn-323. Asp-358 contributes to the AMP binding site. Positions 358, 362, 405, and 406 each coordinate Zn(2+). Position 358 (Asp-358) interacts with CMP. Position 358 (Asp-358) interacts with dTMP. Asp-358 contacts GMP. 2',3'-cGAMP is bound at residue His-362. His-406 serves as a coordination point for AMP. A CMP-binding site is contributed by His-406. His-406 contributes to the dTMP binding site. Residue His-406 coordinates GMP. 6 disulfides stabilise this stretch: Cys-413–Cys-512, Cys-462–Cys-849, Cys-596–Cys-653, Cys-607–Cys-707, Cys-609–Cys-692, and Cys-819–Cys-829. The N-linked (GlcNAc...) asparagine glycan is linked to Asn-459. 2',3'-cGAMP is bound at residue Ser-514. Residue His-517 participates in AMP binding. Position 517 (His-517) interacts with Zn(2+). Residue His-517 participates in CMP binding. A dTMP-binding site is contributed by His-517. His-517 provides a ligand contact to GMP. 2 N-linked (GlcNAc...) asparagine glycosylation sites follow: Asn-567 and Asn-624. The interval 579–628 is linker; sequence KPIYNPSHPKEEGFLSQCPIKSTSNDLGCTCDPWIVPIKDFEKQLNLTTE. A nuclease-like domain region spans residues 635–906; sequence HMTVPYGRPR…THLPIFSQED (272 aa). Ca(2+) is bound by residues Asp-781, Asp-783, Asp-785, Arg-787, and Asp-789.

The protein belongs to the nucleotide pyrophosphatase/phosphodiesterase family. In terms of assembly, ectonucleotide pyrophosphatase/phosphodiesterase family member 1: Homodimer. Ectonucleotide pyrophosphatase/phosphodiesterase family member 1: Interacts with INSR; leading to inhibit INSR autophosphorylation and subsequent activation of INSR kinase activity. Ectonucleotide pyrophosphatase/phosphodiesterase family member 1, secreted form: Monomeric. It depends on Zn(2+) as a cofactor. In terms of processing, N-glycosylated. Post-translationally, the secreted form is produced through cleavage at Lys-85 by intracellular processing. As to expression, selectively expressed on the surface of antibody-secreting cells. Expressed in osteocytes and osteoclasts.

It localises to the cell membrane. The protein resides in the basolateral cell membrane. The protein localises to the secreted. The enzyme catalyses Hydrolytically removes 5'-nucleotides successively from the 3'-hydroxy termini of 3'-hydroxy-terminated oligonucleotides.. It carries out the reaction a ribonucleoside 5'-triphosphate + H2O = a ribonucleoside 5'-phosphate + diphosphate + H(+). It catalyses the reaction ATP + H2O = AMP + diphosphate + H(+). The catalysed reaction is UTP + H2O = UMP + diphosphate + H(+). The enzyme catalyses GTP + H2O = GMP + diphosphate + H(+). It carries out the reaction CTP + H2O = CMP + diphosphate + H(+). It catalyses the reaction 2',3'-cGAMP + 2 H2O = GMP + AMP + 2 H(+). The catalysed reaction is P(1),P(4)-bis(5'-adenosyl) tetraphosphate + H2O = AMP + ATP + 2 H(+). The enzyme catalyses 3',5'-cyclic AMP + H2O = AMP + H(+). With respect to regulation, at low concentrations of ATP, a phosphorylated intermediate is formed which inhibits further hydrolysis. Its function is as follows. Nucleotide pyrophosphatase that generates diphosphate (PPi) and functions in bone mineralization and soft tissue calcification by regulating pyrophosphate levels. PPi inhibits bone mineralization and soft tissue calcification by binding to nascent hydroxyapatite crystals, thereby preventing further growth of these crystals. Preferentially hydrolyzes ATP, but can also hydrolyze other nucleoside 5' triphosphates such as GTP, CTP and UTP to their corresponding monophosphates with release of pyrophosphate, as well as diadenosine polyphosphates, and also 3',5'-cAMP to AMP. May also be involved in the regulation of the availability of nucleotide sugars in the endoplasmic reticulum and Golgi, and the regulation of purinergic signaling. Inhibits ectopic joint calcification and maintains articular chondrocytes by repressing hedgehog signaling; it is however unclear whether hedgehog inhibition is direct or indirect. Appears to modulate insulin sensitivity. Also involved in melanogenesis. Also able to hydrolyze 2',3'-cGAMP (cyclic GMP-AMP), a second messenger that activates TMEM173/STING and triggers type-I interferon production. 2',3'-cGAMP degradation takes place in the lumen or extracellular space, and not in the cytosol where it is produced; the role of 2',3'-cGAMP hydrolysis is therefore unclear. Not able to hydrolyze the 2',3'-cGAMP linkage isomer 3',3'-cGAMP. The chain is Ectonucleotide pyrophosphatase/phosphodiesterase family member 1 from Mus musculus (Mouse).